The following is a 90-amino-acid chain: Small ribosomal subunit protein uS15c (90 aa).

Belongs to the universal ribosomal protein uS15 family. In terms of assembly, part of the 30S ribosomal subunit.

The protein resides in the plastid. It is found in the chloroplast. This chain is Small ribosomal subunit protein uS15c (rps15), found in Panax ginseng (Korean ginseng).